The following is a 114-amino-acid chain: UPF0212 protein UNCMA_00570 (114 aa).

Belongs to the UPF0212 family.

The protein is UPF0212 protein UNCMA_00570 of Methanocella arvoryzae (strain DSM 22066 / NBRC 105507 / MRE50).